A 194-amino-acid chain; its full sequence is Glycerol-3-phosphate acyltransferase (194 aa).

A run of 5 helical transmembrane segments spans residues 7 to 27, 59 to 79, 86 to 106, 116 to 136, and 157 to 177; these read LLMA…YWVC, LTLF…AMLG, GVTA…HFKG, AGLA…AAVV, and AWRL…FILI.

Belongs to the PlsY family. Probably interacts with PlsX.

Its subcellular location is the cell inner membrane. It catalyses the reaction an acyl phosphate + sn-glycerol 3-phosphate = a 1-acyl-sn-glycero-3-phosphate + phosphate. It functions in the pathway lipid metabolism; phospholipid metabolism. Its function is as follows. Catalyzes the transfer of an acyl group from acyl-phosphate (acyl-PO(4)) to glycerol-3-phosphate (G3P) to form lysophosphatidic acid (LPA). This enzyme utilizes acyl-phosphate as fatty acyl donor, but not acyl-CoA or acyl-ACP. This chain is Glycerol-3-phosphate acyltransferase, found in Hahella chejuensis (strain KCTC 2396).